The chain runs to 633 residues: Mitochondrial Rho GTPase 1 (633 aa).

In terms of domain architecture, Miro 1 spans 1–170 (MATVRICVCG…FFLCQKAVTH (170 aa)). Residues 1–603 (MATVRICVCG…PRSEEDVEGK (603 aa)) are Cytoplasmic-facing. GTP-binding positions include 10 to 17 (GDEGTGKS), 59 to 63 (DTSAL), and 115 to 118 (NKSD). EF-hand domains follow at residues 186–221 (AAVA…CFEK) and 306–341 (EGYR…TPGL). Residues D199, D201, D203, Y205, E210, D319, D321, D323, and E330 each coordinate Ca(2+). The interval 398–418 (NPSTTAALKVTRPRKRRKRPG) is disordered. The span at 408–418 (TRPRKRRKRPG) shows a compositional bias: basic residues. The region spanning 422–588 (RNVVLGHVLG…FVHIAEAAME (167 aa)) is the Miro 2 domain. GTP contacts are provided by residues 431–438 (GPPGSGKS), 467–471 (ELPGG), and 537–540 (LKAD). A helical; Anchor for type IV membrane protein membrane pass occupies residues 604–624 (WMAWGIALGAVVCAGAAAVMI). The Mitochondrial intermembrane segment spans residues 625–633 (WRRVSGSGT).

It belongs to the mitochondrial Rho GTPase family.

The protein resides in the mitochondrion outer membrane. Mitochondrial GTPase involved in mitochondrial trafficking. Probably involved in control of anterograde transport of mitochondria and their subcellular distribution. This Aspergillus oryzae (strain ATCC 42149 / RIB 40) (Yellow koji mold) protein is Mitochondrial Rho GTPase 1 (gem1).